A 290-amino-acid chain; its full sequence is N-acetylmannosamine kinase (290 aa).

Residues alanine 6–lysine 13 and glycine 132–leucine 139 each bind ATP. Zn(2+) is bound by residues histidine 156, cysteine 166, cysteine 168, and cysteine 173.

Belongs to the ROK (NagC/XylR) family. NanK subfamily. As to quaternary structure, homodimer.

The catalysed reaction is an N-acyl-D-mannosamine + ATP = an N-acyl-D-mannosamine 6-phosphate + ADP + H(+). It participates in amino-sugar metabolism; N-acetylneuraminate degradation; D-fructose 6-phosphate from N-acetylneuraminate: step 2/5. In terms of biological role, catalyzes the phosphorylation of N-acetylmannosamine (ManNAc) to ManNAc-6-P. This chain is N-acetylmannosamine kinase, found in Yersinia pseudotuberculosis serotype O:1b (strain IP 31758).